The sequence spans 618 residues: Proline--tRNA ligase (618 aa).

Belongs to the class-II aminoacyl-tRNA synthetase family. ProS type 1 subfamily. Homodimer.

It is found in the cytoplasm. The catalysed reaction is tRNA(Pro) + L-proline + ATP = L-prolyl-tRNA(Pro) + AMP + diphosphate. Its function is as follows. Catalyzes the attachment of proline to tRNA(Pro) in a two-step reaction: proline is first activated by ATP to form Pro-AMP and then transferred to the acceptor end of tRNA(Pro). As ProRS can inadvertently accommodate and process non-cognate amino acids such as alanine and cysteine, to avoid such errors it has two additional distinct editing activities against alanine. One activity is designated as 'pretransfer' editing and involves the tRNA(Pro)-independent hydrolysis of activated Ala-AMP. The other activity is designated 'posttransfer' editing and involves deacylation of mischarged Ala-tRNA(Pro). The misacylated Cys-tRNA(Pro) is not edited by ProRS. The chain is Proline--tRNA ligase from Streptococcus pyogenes serotype M28 (strain MGAS6180).